The chain runs to 381 residues: Layilin (381 aa).

Positions 1–24 are cleaved as a signal peptide; sequence MQPGAALQAMLLAVLLAKPRDSKG. At 25 to 235 the chain is on the extracellular side; it reads RLLSASDLDP…ERREAALNLA (211 aa). Residues 45 to 185 form the C-type lectin domain; it reads TRRPCYKVIY…CNMKNNFICK (141 aa). Cystine bridges form between Cys71–Cys184 and Cys150–Cys176. A glycan (N-linked (GlcNAc...) asparagine) is linked at Asn117. A helical membrane pass occupies residues 236 to 256; that stretch reads YILIPSIPLFLLLVVTSAVCW. The Cytoplasmic segment spans residues 257–381; the sequence is VWICRRKREQ…SGWVENEIYY (125 aa). A phosphoserine mark is found at Ser286 and Ser299. Residues 330–374 form an interaction with NF2 region; it reads DYENIAVNPSESGFVTLASMESGFVTNDIYEFSPDRMGRSKESGW. Residues 337–381 form an interaction with TLN1 region; that stretch reads NPSESGFVTLASMESGFVTNDIYEFSPDRMGRSKESGWVENEIYY. Tandem repeats lie at residues 340–344, 350–354, 356–359, 371–375, and 377–380. The 3 X 5 AA repeats of E-S-G-X-V stretch occupies residues 340–375; it reads ESGFVTLASMESGFVTNDIYEFSPDRMGRSKESGWV. The interval 356 to 380 is 2 X 4 AA repeats of N-X-I-Y; that stretch reads NDIYEFSPDRMGRSKESGWVENEIY.

As to quaternary structure, interacts with TLN1. Interacts with NF2 and RDX.

The protein resides in the membrane. Its function is as follows. Receptor for hyaluronate. The protein is Layilin (Layn) of Mus musculus (Mouse).